A 602-amino-acid chain; its full sequence is MPRMTQLDLIRNFSIVAHIDHGKSTLADRLIQLTGTVAERDMKAQILDSMDIERERGITIKANTVRIDYPAKDGRTYVLNLIDTPGHVDFAYEVSRSMRAVEGSLLVVDASQGVEAQTLANVYQALDAGHEIVPVLNKIDLPAAEPERVKSQIEDVIGLDASDAVLISAKSGLGIPDVLEAIVHRLPPPKGDREAPLKAMLVDSWYDAYLGVVVMIRVMDGVIRKGDRVKMMQTGAVYGIDRLAVLKPQMVDIAELGPGEIGVLTASIKQVRDTRVGDTITHEKKGCAAPLPGFKPAQPVVFCGLFPVDANDFEALREAIEKLALNDASFTYEMETSAALGFGFRCGFLGLLHLEVVRDRLEREYDLDLITTAPSVVYQIYMKDGTLQELHNPTDMPDLTYVDHIEEPRIRATIMVPDEYLGDVLKLCQDRRGIQLDLSYAGARAMVVYDLPLNEVVFDFYDRLKSVTKGYASFDYQITGYREDFLVKMSILVNDEPVDALSMMVHRDRADMRGRAMVEKLKELIPRHMFKIPIQAAIGGRVIARETISAMRKDVTAKCYGGDATRKRKLLDKQKAGKKKMRQFGKVEIPQQAFINALKMDS.

One can recognise a tr-type G domain in the interval 8–190 (DLIRNFSIVA…AIVHRLPPPK (183 aa)). GTP-binding positions include 20–25 (DHGKST) and 137–140 (NKID).

It belongs to the TRAFAC class translation factor GTPase superfamily. Classic translation factor GTPase family. LepA subfamily.

The protein resides in the cell inner membrane. The catalysed reaction is GTP + H2O = GDP + phosphate + H(+). Functionally, required for accurate and efficient protein synthesis under certain stress conditions. May act as a fidelity factor of the translation reaction, by catalyzing a one-codon backward translocation of tRNAs on improperly translocated ribosomes. Back-translocation proceeds from a post-translocation (POST) complex to a pre-translocation (PRE) complex, thus giving elongation factor G a second chance to translocate the tRNAs correctly. Binds to ribosomes in a GTP-dependent manner. The sequence is that of Elongation factor 4 from Cereibacter sphaeroides (strain ATCC 17023 / DSM 158 / JCM 6121 / CCUG 31486 / LMG 2827 / NBRC 12203 / NCIMB 8253 / ATH 2.4.1.) (Rhodobacter sphaeroides).